Reading from the N-terminus, the 662-residue chain is UvrABC system protein B (662 aa).

The 158-residue stretch at 25-182 (KGIEKREKFQ…KKLVEIQYER (158 aa)) folds into the Helicase ATP-binding domain. ATP is bound at residue 38–45 (GVTGSGKT). A Beta-hairpin motif is present at residues 91–114 (YYDYYQPEAYVAQSDTYIEKDASI). The Helicase C-terminal domain occupies 429–595 (QIDDLYTSIQ…TIIKDIREVI (167 aa)). The 36-residue stretch at 622-657 (DKLIEKYEEEMKEAAQNLQFEKAAHLRDVIYKLKKD) folds into the UVR domain.

It belongs to the UvrB family. In terms of assembly, forms a heterotetramer with UvrA during the search for lesions. Interacts with UvrC in an incision complex.

It is found in the cytoplasm. The UvrABC repair system catalyzes the recognition and processing of DNA lesions. A damage recognition complex composed of 2 UvrA and 2 UvrB subunits scans DNA for abnormalities. Upon binding of the UvrA(2)B(2) complex to a putative damaged site, the DNA wraps around one UvrB monomer. DNA wrap is dependent on ATP binding by UvrB and probably causes local melting of the DNA helix, facilitating insertion of UvrB beta-hairpin between the DNA strands. Then UvrB probes one DNA strand for the presence of a lesion. If a lesion is found the UvrA subunits dissociate and the UvrB-DNA preincision complex is formed. This complex is subsequently bound by UvrC and the second UvrB is released. If no lesion is found, the DNA wraps around the other UvrB subunit that will check the other stand for damage. The polypeptide is UvrABC system protein B (Clostridium botulinum (strain Langeland / NCTC 10281 / Type F)).